The sequence spans 346 residues: Phosphoribosylformylglycinamidine cyclo-ligase (346 aa).

The protein belongs to the AIR synthase family.

It is found in the cytoplasm. It carries out the reaction 2-formamido-N(1)-(5-O-phospho-beta-D-ribosyl)acetamidine + ATP = 5-amino-1-(5-phospho-beta-D-ribosyl)imidazole + ADP + phosphate + H(+). It functions in the pathway purine metabolism; IMP biosynthesis via de novo pathway; 5-amino-1-(5-phospho-D-ribosyl)imidazole from N(2)-formyl-N(1)-(5-phospho-D-ribosyl)glycinamide: step 2/2. This chain is Phosphoribosylformylglycinamidine cyclo-ligase, found in Geobacillus kaustophilus (strain HTA426).